The sequence spans 140 residues: Large ribosomal subunit protein uL16c (140 aa).

This sequence belongs to the universal ribosomal protein uL16 family. In terms of assembly, part of the 50S ribosomal subunit.

It localises to the plastid. Its subcellular location is the chloroplast. This chain is Large ribosomal subunit protein uL16c, found in Psilotum nudum (Whisk fern).